The primary structure comprises 414 residues: Cyclic di-GMP phosphodiesterase PA4108 (414 aa).

One can recognise an HD-GYP domain in the interval 133-330 (ISASVLRHPN…YPVGALVRLE (198 aa)). A divalent metal cation contacts are provided by histidine 160, histidine 192, aspartate 193, histidine 221, histidine 246, and histidine 247.

In terms of assembly, monomer.

The enzyme catalyses 3',3'-c-di-GMP + 2 H2O = 2 GMP + 2 H(+). Its activity is regulated as follows. Activated by Mg(2+) and Mn(2+). Phosphodiesterase (PDE) that catalyzes the hydrolysis of cyclic diguanylate (c-di-GMP) to GMP. Hydrolyzes c-di-GMP to GMP in a two-step reaction, via the linear intermediate 5'-phosphoguanylyl(3'-&gt;5')guanosine (pGpG). In vitro, can use pGpG as an alternative substrate and hydrolyze it into GMP. Acts in regulation of motility, synthesis of virulence determinants and biofilm architecture. The polypeptide is Cyclic di-GMP phosphodiesterase PA4108 (Pseudomonas aeruginosa (strain ATCC 15692 / DSM 22644 / CIP 104116 / JCM 14847 / LMG 12228 / 1C / PRS 101 / PAO1)).